The sequence spans 80 residues: Teretoxin Tsu6.5 (80 aa).

Residues 1–21 form the signal peptide; sequence MAINGRLLCLCLVLGLVFESL. Residues 22–42 constitute a propeptide that is removed on maturation; the sequence is GHPSVQEKRAAEDSKPSGERR.

It belongs to the teretoxin M (TM) superfamily. In terms of processing, contains 3 disulfide bonds. Expressed by the venom duct.

The protein localises to the secreted. The polypeptide is Teretoxin Tsu6.5 (Terebra subulata (Chocolate spotted auger)).